Reading from the N-terminus, the 128-residue chain is Glycoprotein hormone alpha-2 (128 aa).

Residues 1–20 (MPMAPRVLLLCLLGLAVTEG) form the signal peptide. 4 cysteine pairs are disulfide-bonded: Cys-30/Cys-88, Cys-47/Cys-102, Cys-56/Cys-118, and Cys-60/Cys-120. Asn-36 and Asn-80 each carry an N-linked (GlcNAc...) asparagine glycan.

Belongs to the glycoprotein hormones subunit alpha family. In terms of assembly, heterodimer with GPHB5; this heterodimer interacts with thyroid-stimulating hormone receptor (TSHR), and hence stimulates cAMP production.

The protein localises to the secreted. In terms of biological role, functions as a heterodimeric glycoprotein hormone with GPHB5 able to bind and activate the thyroid-stimulating hormone receptor (TSHR), leading to increased cAMP production. Plays a central role in controlling thyroid cell metabolism. The polypeptide is Glycoprotein hormone alpha-2 (Gpha2) (Mus musculus (Mouse)).